The primary structure comprises 292 residues: Ribosomal RNA small subunit methyltransferase A (292 aa).

Asn29, Leu31, Gly56, Glu77, Asp102, and Asn127 together coordinate S-adenosyl-L-methionine.

Belongs to the class I-like SAM-binding methyltransferase superfamily. rRNA adenine N(6)-methyltransferase family. RsmA subfamily.

The protein localises to the cytoplasm. The enzyme catalyses adenosine(1518)/adenosine(1519) in 16S rRNA + 4 S-adenosyl-L-methionine = N(6)-dimethyladenosine(1518)/N(6)-dimethyladenosine(1519) in 16S rRNA + 4 S-adenosyl-L-homocysteine + 4 H(+). Functionally, specifically dimethylates two adjacent adenosines (A1518 and A1519) in the loop of a conserved hairpin near the 3'-end of 16S rRNA in the 30S particle. May play a critical role in biogenesis of 30S subunits. This chain is Ribosomal RNA small subunit methyltransferase A, found in Bacillus subtilis (strain 168).